The primary structure comprises 75 residues: Ferredoxin-thioredoxin reductase, variable chain (75 aa).

The interval 43–46 (QGRP) is interaction with ferredoxin.

This sequence belongs to the ferredoxin thioredoxin reductase alpha subunit family. In terms of assembly, heterodimer of subunit A (variable subunit) and subunit B (catalytic subunit). Heterodimeric FTR forms a complex with ferredoxin and thioredoxin.

Variable subunit of the ferredoxin-thioredoxin reductase (FTR), which catalyzes the two-electron reduction of thioredoxins by the electrons provided by reduced ferredoxin. The chain is Ferredoxin-thioredoxin reductase, variable chain (ftrV) from Synechocystis sp. (strain ATCC 27184 / PCC 6803 / Kazusa).